The following is a 143-amino-acid chain: Transcription antitermination protein NusB (143 aa).

The protein belongs to the NusB family.

In terms of biological role, involved in transcription antitermination. Required for transcription of ribosomal RNA (rRNA) genes. Binds specifically to the boxA antiterminator sequence of the ribosomal RNA (rrn) operons. The protein is Transcription antitermination protein NusB of Clostridium botulinum (strain ATCC 19397 / Type A).